A 580-amino-acid chain; its full sequence is Potassium-transporting ATPase potassium-binding subunit (580 aa).

Helical transmembrane passes span A3–L23, D65–Q85, G136–I156, L179–V199, L263–F283, G293–A313, G399–G419, M436–V456, A504–A524, and L546–A566.

The protein belongs to the KdpA family. As to quaternary structure, the system is composed of three essential subunits: KdpA, KdpB and KdpC.

The protein localises to the cell inner membrane. Part of the high-affinity ATP-driven potassium transport (or Kdp) system, which catalyzes the hydrolysis of ATP coupled with the electrogenic transport of potassium into the cytoplasm. This subunit binds the periplasmic potassium ions and delivers the ions to the membrane domain of KdpB through an intramembrane tunnel. The chain is Potassium-transporting ATPase potassium-binding subunit from Sorangium cellulosum (strain So ce56) (Polyangium cellulosum (strain So ce56)).